A 61-amino-acid chain; its full sequence is Temporin-SN4 (61 aa).

The signal sequence occupies residues 1-22; that stretch reads MFTLKKTLLLLFFLGTINLSLC. Residues 23–44 constitute a propeptide, removed in mature form; it reads EEERNAEEERRDGDDEMDVEVK. Lys-61 carries the post-translational modification Lysine amide.

It belongs to the frog skin active peptide (FSAP) family. Temporin subfamily. As to expression, expressed by the skin glands.

The protein localises to the secreted. Antimicrobial peptide. Active against some Gram-positive and Gram-negative bacterial strains. Active against fungus C.glabrata 090902 but not against C.albicans ATCC 12231. Shows weak hemolytic activity against human erythrocytes. The chain is Temporin-SN4 from Sylvirana spinulosa (Fine-spined frog).